Here is a 250-residue protein sequence, read N- to C-terminus: Large ribosomal subunit protein uL13c (250 aa).

A chloroplast-targeting transit peptide spans 1–47 (MATMACASSLTFPSAQTQKSFFGTNVKQTPVLSFPRPTVAAAVAVSA).

Component of the chloroplast large ribosomal subunit (LSU). Mature 70S chloroplast ribosomes of higher plants consist of a small (30S) and a large (50S) subunit. The 30S small subunit contains 1 molecule of ribosomal RNA (16S rRNA) and 24 different proteins. The 50S large subunit contains 3 rRNA molecules (23S, 5S and 4.5S rRNA) and 33 different proteins.

It localises to the plastid. Its subcellular location is the chloroplast. Its function is as follows. Component of the chloroplast ribosome (chloro-ribosome), a dedicated translation machinery responsible for the synthesis of chloroplast genome-encoded proteins, including proteins of the transcription and translation machinery and components of the photosynthetic apparatus. This is Large ribosomal subunit protein uL13c (RPL13) from Spinacia oleracea (Spinach).